A 542-amino-acid polypeptide reads, in one-letter code: Organic anion transporter 3 (542 aa).

Topologically, residues 1 to 20 are cytoplasmic; sequence MTFSEILDRVGSMGRFQFLH. A Phosphoserine modification is found at Ser-4. The chain crosses the membrane as a helical span at residues 21–41; the sequence is VAILGLPILNMANHNLLQIFT. At 42–123 the chain is on the extracellular side; sequence AATPVHHCRP…LVCNSNKLKE (82 aa). Asn-86 is a glycosylation site (N-linked (GlcNAc...) asparagine). Residues 124–144 traverse the membrane as a helical segment; the sequence is MAQSIFMAGILIGGLVLGDLS. Topologically, residues 145 to 154 are cytoplasmic; it reads DRFGRRPILT. A helical transmembrane segment spans residues 155–175; it reads CSYLLLAASGSGAAFSPTFPI. A topological domain (extracellular) is located at residue Tyr-176. A helical membrane pass occupies residues 177–197; it reads MVFRFLCGFGISGITLSTVIL. Topologically, residues 198–212 are cytoplasmic; sequence NVEWVPTRMRAIMST. A helical transmembrane segment spans residues 213 to 233; sequence ALGYCYTFGQFILPGLAYAIP. The Extracellular portion of the chain corresponds to 234 to 236; that stretch reads QWR. The chain crosses the membrane as a helical span at residues 237–257; sequence WLQLTVSIPFFIFFLSSWWTP. The Cytoplasmic portion of the chain corresponds to 258 to 327; it reads ESIRWLVLSG…FRIPMLRRMT (70 aa). The chain crosses the membrane as a helical span at residues 328–348; that stretch reads FCLSLAWFATGFAYYSLAMGV. Residues 349–354 are Extracellular-facing; it reads EEFGVN. The helical transmembrane segment at 355–375 threads the bilayer; it reads LYILQIIFGGVDVPAKFITIL. At 376–386 the chain is on the cytoplasmic side; it reads SLSYLGRHTTQ. A helical membrane pass occupies residues 387–407; that stretch reads AAALLLAGGAILALTFVPLDL. Topologically, residues 408–471 are extracellular; that stretch reads QTVRTVLAVF…LVKITGEVQP (64 aa). A helical membrane pass occupies residues 472-492; the sequence is FIPNIIYGITALLGGSAAFFL. Residues 493-542 lie on the Cytoplasmic side of the membrane; it reads PETLNQPLPETIEDLENWSLRAKKPKQEPEVEKASQRIPLQPHGPGLGSS. The tract at residues 515 to 542 is disordered; that stretch reads KKPKQEPEVEKASQRIPLQPHGPGLGSS. The segment covering 517–527 has biased composition (basic and acidic residues); it reads PKQEPEVEKAS.

It belongs to the major facilitator (TC 2.A.1) superfamily. Organic cation transporter (TC 2.A.1.19) family.

Its subcellular location is the basolateral cell membrane. The catalysed reaction is estrone 3-sulfate(out) + glutarate(in) = estrone 3-sulfate(in) + glutarate(out). It carries out the reaction estrone 3-sulfate(in) + 2-oxoglutarate(out) = estrone 3-sulfate(out) + 2-oxoglutarate(in). The enzyme catalyses glutarate(in) + 2-oxoglutarate(out) = glutarate(out) + 2-oxoglutarate(in). It catalyses the reaction urate(in) + 2-oxoglutarate(out) = urate(out) + 2-oxoglutarate(in). The catalysed reaction is taurocholate(out) + glutarate(in) = taurocholate(in) + glutarate(out). It carries out the reaction dehydroepiandrosterone 3-sulfate(out) + glutarate(in) = dehydroepiandrosterone 3-sulfate(in) + glutarate(out). The enzyme catalyses prostaglandin F2alpha(out) + glutarate(in) = prostaglandin F2alpha(in) + glutarate(out). It catalyses the reaction prostaglandin F2alpha(out) + 2-oxoglutarate(in) = prostaglandin F2alpha(in) + 2-oxoglutarate(out). The catalysed reaction is (R)-carnitine(out) + 2-oxoglutarate(in) = (R)-carnitine(in) + 2-oxoglutarate(out). It carries out the reaction glutarate(in) + (R)-carnitine(out) = glutarate(out) + (R)-carnitine(in). The enzyme catalyses prostaglandin E2(out) + 2-oxoglutarate(in) = prostaglandin E2(in) + 2-oxoglutarate(out). It catalyses the reaction prostaglandin E2(out) + glutarate(in) = prostaglandin E2(in) + glutarate(out). The catalysed reaction is urate(in) + glutarate(out) = urate(out) + glutarate(in). It carries out the reaction taurocholate(out) + 2-oxoglutarate(in) = taurocholate(in) + 2-oxoglutarate(out). The enzyme catalyses dehydroepiandrosterone 3-sulfate(out) + 2-oxoglutarate(in) = dehydroepiandrosterone 3-sulfate(in) + 2-oxoglutarate(out). It catalyses the reaction kynurenate(out) + a dicarboxylate(in) = kynurenate(in) + a dicarboxylate(out). The catalysed reaction is (indol-3-yl)acetate(out) + a dicarboxylate(in) = (indol-3-yl)acetate(in) + a dicarboxylate(out). It carries out the reaction indoxyl sulfate(out) + a dicarboxylate(in) = indoxyl sulfate(in) + a dicarboxylate(out). The enzyme catalyses N-benzoylglycine(out) + a dicarboxylate(in) = N-benzoylglycine(in) + a dicarboxylate(out). It catalyses the reaction 3-carboxy-4-methyl-5-propyl-2-furanpropanoate(out) + a dicarboxylate(in) = 3-carboxy-4-methyl-5-propyl-2-furanpropanoate(in) + a dicarboxylate(out). The catalysed reaction is (6R)-L-erythro-5,6,7,8-tetrahydrobiopterin(out) + a dicarboxylate(in) = (6R)-L-erythro-5,6,7,8-tetrahydrobiopterin(in) + a dicarboxylate(out). It carries out the reaction L-erythro-7,8-dihydrobiopterin(out) + a dicarboxylate(in) = L-erythro-7,8-dihydrobiopterin(in) + a dicarboxylate(out). The enzyme catalyses L-sepiapterin(out) + a dicarboxylate(in) = L-sepiapterin(in) + a dicarboxylate(out). In terms of biological role, functions as an organic anion/dicarboxylate exchanger that couples organic anion uptake indirectly to the sodium gradient. Transports organic anions such as estrone 3-sulfate (E1S) and urate in exchange for dicarboxylates such as glutarate or ketoglutarate (2-oxoglutarate). Plays an important role in the excretion of endogenous and exogenous organic anions, especially from the kidney and the brain. E1S transport is pH- and chloride-dependent and may also involve E1S/cGMP exchange. Responsible for the transport of prostaglandin E2 (PGE2) and prostaglandin F2(alpha) (PGF2(alpha)) in the basolateral side of the renal tubule. Involved in the transport of neuroactive tryptophan metabolites kynurenate and xanthurenate. Functions as a biopterin transporters involved in the uptake and the secretion of coenzymes tetrahydrobiopterin (BH4), dihydrobiopterin (BH2) and sepiapterin to urine, thereby determining baseline levels of blood biopterins. May be involved in the basolateral transport of steviol, a metabolite of the popular sugar substitute stevioside. May participate in the detoxification/ renal excretion of drugs and xenobiotics, such as the histamine H(2)-receptor antagonists fexofenadine and cimetidine, the antibiotic benzylpenicillin (PCG), the anionic herbicide 2,4-dichloro-phenoxyacetate (2,4-D), the diagnostic agent p-aminohippurate (PAH), the antiviral acyclovir (ACV), and the mycotoxin ochratoxin (OTA), by transporting these exogenous organic anions across the cell membrane in exchange for dicarboxylates such as 2-oxoglutarate. Contributes to the renal uptake of potent uremic toxins (indoxyl sulfate (IS), indole acetate (IA), hippurate/N-benzoylglycine (HA) and 3-carboxy-4-methyl-5-propyl-2-furanpropionate (CMPF)), pravastatin, PCG, E1S and dehydroepiandrosterone sulfate (DHEAS), and is partly involved in the renal uptake of temocaprilat (an angiotensin-converting enzyme (ACE) inhibitor). May contribute to the release of cortisol in the adrenals. Involved in one of the detoxification systems on the choroid plexus (CP), removes substrates such as E1S or taurocholate (TC), PCG, 2,4-D and PAH, from the cerebrospinal fluid (CSF) to the blood for eventual excretion in urine and bile. Also contributes to the uptake of several other organic compounds such as the prostanoids prostaglandin E(2) and prostaglandin F(2-alpha), L-carnitine, and the therapeutic drugs allopurinol, 6-mercaptopurine (6-MP) and 5-fluorouracil (5-FU). Mediates the transport of PAH, PCG, and the statins pravastatin and pitavastatin, from the cerebrum into the blood circulation across the blood-brain barrier (BBB). In summary, plays a role in the efflux of drugs and xenobiotics, helping reduce their undesired toxicological effects on the body. The chain is Organic anion transporter 3 (SLC22A8) from Pongo abelii (Sumatran orangutan).